The sequence spans 124 residues: Large ribosomal subunit protein bL12 (124 aa).

This sequence belongs to the bacterial ribosomal protein bL12 family. As to quaternary structure, homodimer. Part of the ribosomal stalk of the 50S ribosomal subunit. Forms a multimeric L10(L12)X complex, where L10 forms an elongated spine to which 2 to 4 L12 dimers bind in a sequential fashion. Binds GTP-bound translation factors.

Functionally, forms part of the ribosomal stalk which helps the ribosome interact with GTP-bound translation factors. Is thus essential for accurate translation. This is Large ribosomal subunit protein bL12 from Borreliella burgdorferi (strain ATCC 35210 / DSM 4680 / CIP 102532 / B31) (Borrelia burgdorferi).